Consider the following 366-residue polypeptide: Putative agmatine deiminase (366 aa).

The active-site Amidino-cysteine intermediate is the Cys357.

Belongs to the agmatine deiminase family.

The enzyme catalyses agmatine + H2O = N-carbamoylputrescine + NH4(+). This is Putative agmatine deiminase from Lactococcus lactis subsp. lactis (strain IL1403) (Streptococcus lactis).